A 338-amino-acid chain; its full sequence is Lipoate-protein ligase A (338 aa).

Residues 29-216 enclose the BPL/LPL catalytic domain; that stretch reads PATQRVLFLW…AFFAHYGERV (188 aa). ATP-binding positions include Arg71, 76 to 79, and Lys134; that span reads GAVF. Lys134 is a (R)-lipoate binding site.

The protein belongs to the LplA family. As to quaternary structure, monomer.

Its subcellular location is the cytoplasm. The enzyme catalyses L-lysyl-[lipoyl-carrier protein] + (R)-lipoate + ATP = N(6)-[(R)-lipoyl]-L-lysyl-[lipoyl-carrier protein] + AMP + diphosphate + H(+). It participates in protein modification; protein lipoylation via exogenous pathway; protein N(6)-(lipoyl)lysine from lipoate: step 1/2. Its pathway is protein modification; protein lipoylation via exogenous pathway; protein N(6)-(lipoyl)lysine from lipoate: step 2/2. Its function is as follows. Catalyzes both the ATP-dependent activation of exogenously supplied lipoate to lipoyl-AMP and the transfer of the activated lipoyl onto the lipoyl domains of lipoate-dependent enzymes. In Salmonella schwarzengrund (strain CVM19633), this protein is Lipoate-protein ligase A.